A 138-amino-acid polypeptide reads, in one-letter code: Ribosome-binding factor A (138 aa).

Positions 116–138 (VAQDSQHQEGPASPDAKPESTEE) are disordered.

It belongs to the RbfA family. Monomer. Binds 30S ribosomal subunits, but not 50S ribosomal subunits or 70S ribosomes.

The protein localises to the cytoplasm. Functionally, one of several proteins that assist in the late maturation steps of the functional core of the 30S ribosomal subunit. Associates with free 30S ribosomal subunits (but not with 30S subunits that are part of 70S ribosomes or polysomes). Required for efficient processing of 16S rRNA. May interact with the 5'-terminal helix region of 16S rRNA. The protein is Ribosome-binding factor A of Pseudomonas syringae pv. tomato (strain ATCC BAA-871 / DC3000).